The chain runs to 78 residues: Large ribosomal subunit protein bL28 (78 aa).

Belongs to the bacterial ribosomal protein bL28 family.

The chain is Large ribosomal subunit protein bL28 from Acidithiobacillus ferrooxidans (strain ATCC 23270 / DSM 14882 / CIP 104768 / NCIMB 8455) (Ferrobacillus ferrooxidans (strain ATCC 23270)).